The sequence spans 37 residues: MVEPLLSGIVLGLVPITITGLLVTAYLQYRRGDSLNF.

The chain crosses the membrane as a helical span at residues 5-25 (LLSGIVLGLVPITITGLLVTA).

The protein belongs to the PetG family. The 4 large subunits of the cytochrome b6-f complex are cytochrome b6, subunit IV (17 kDa polypeptide, PetD), cytochrome f and the Rieske protein, while the 4 small subunits are PetG, PetL, PetM and PetN. The complex functions as a dimer.

The protein resides in the plastid. It localises to the chloroplast thylakoid membrane. Its function is as follows. Component of the cytochrome b6-f complex, which mediates electron transfer between photosystem II (PSII) and photosystem I (PSI), cyclic electron flow around PSI, and state transitions. PetG is required for either the stability or assembly of the cytochrome b6-f complex. The sequence is that of Cytochrome b6-f complex subunit 5 from Tupiella akineta (Green alga).